The sequence spans 227 residues: Cytidylate kinase (227 aa).

Residue 10–18 (GPASSGKST) participates in ATP binding.

This sequence belongs to the cytidylate kinase family. Type 1 subfamily.

It is found in the cytoplasm. It catalyses the reaction CMP + ATP = CDP + ADP. It carries out the reaction dCMP + ATP = dCDP + ADP. In Streptococcus mutans serotype c (strain ATCC 700610 / UA159), this protein is Cytidylate kinase.